Consider the following 1188-residue polypeptide: NF-X1-type zinc finger protein NFXL1 (1188 aa).

The span at Met-1–His-15 shows a compositional bias: basic and acidic residues. Disordered regions lie at residues Met-1–Asp-52 and Gln-65–Glu-195. Composition is skewed to polar residues over residues His-19–Val-34 and Ala-168–Val-186. An RING-type; degenerate zinc finger spans residues Cys-223 to Gln-279. 9 NF-X1-type zinc fingers span residues Cys-335 to Ala-353, Cys-390 to Val-409, Cys-454 to Leu-473, Cys-513 to Val-532, Cys-572 to Lys-607, Cys-611 to Glu-630, Cys-668 to Thr-686, Cys-721 to Gln-751, and Cys-760 to Phe-781. In terms of domain architecture, R3H spans Pro-894–Ala-963. Positions Ser-1100–Glu-1188 are disordered. Polar residues-rich tracts occupy residues Ala-1126–Arg-1138 and Glu-1159–Lys-1169.

This sequence belongs to the NFX1 family. In terms of tissue distribution, expressed in seedlings, roots, stems, leaves, buds, flowers and siliques.

It localises to the nucleus. Its pathway is protein modification; protein ubiquitination. Mediates E2-dependent ubiquitination. Confers resistance to osmotic stress such as high salinity. Promotes H(2)O(2) production. Negative regulator of some defense-related genes via an salicylic acid (SA)-dependent signaling pathway. Confers susceptibility to the compatible phytopathogen Pseudomonas syringae pv. tomato strain DC3000 (Pst DC3000). Mediates resistance to type A trichothecenes (phytotoxins produced by phytopathogenic fungi). The chain is NF-X1-type zinc finger protein NFXL1 (NFXL1) from Arabidopsis thaliana (Mouse-ear cress).